Here is a 218-residue protein sequence, read N- to C-terminus: Histone H1.1 (218 aa).

The interval M1–S42 is disordered. S2 is subject to N-acetylserine. Phosphoserine is present on residues S2 and S12. At K17 the chain carries N6-acetyllysine. Residues A20–P38 show a composition bias toward basic residues. N6-(beta-hydroxybutyryl)lysine is present on K37. The region spanning A39–K112 is the H15 domain. S44 carries the post-translational modification Phosphoserine. K55 carries the post-translational modification N6-(beta-hydroxybutyryl)lysine. R57 carries the citrulline modification. At K67 the chain carries N6-(beta-hydroxybutyryl)lysine. Position 78 is an N6-acetyllysine (K78). K88 is subject to N6-(beta-hydroxybutyryl)lysine. K93 is subject to N6-(beta-hydroxybutyryl)lysine; alternate. K93 bears the N6-acetyllysine; alternate mark. A Phosphoserine; by PKC modification is found at S107. N6-(beta-hydroxybutyryl)lysine is present on K109. The segment at S116 to K218 is disordered. Over residues A119–K149 the composition is skewed to low complexity. Position 125 is an N6-acetyllysine (K125). Basic residues-rich tracts occupy residues K150–A183 and K190–K218. T206 carries the post-translational modification Phosphothreonine.

It belongs to the histone H1/H5 family. In terms of assembly, interacts with DFFB. In terms of processing, H1 histones are progressively phosphorylated during the cell cycle, becoming maximally phosphorylated during late G2 phase and M phase, and being dephosphorylated sharply thereafter. Post-translationally, citrullination at Arg-57 (H1R54ci) by PADI4 takes place within the DNA-binding site of H1 and results in its displacement from chromatin and global chromatin decondensation, thereby promoting pluripotency and stem cell maintenance.

Its subcellular location is the nucleus. The protein localises to the chromosome. Its function is as follows. H1 histones bind to linker DNA between nucleosomes forming the macromolecular structure known as the chromatin fiber. H1 histones are necessary for the condensation of nucleosome chains into higher-order structured fibers. Also acts as a regulator of individual gene transcription through chromatin remodeling. This is Histone H1.1 from Bos taurus (Bovine).